The following is a 278-amino-acid chain: Extracellular metalloprotease MCYG_03238 (278 aa).

Positions 1–19 are cleaved as a signal peptide; that stretch reads MRFSIVLSSIAALSSVAAA. The N-linked (GlcNAc...) asparagine glycan is linked to Asn-52. His-170 contacts Zn(2+). The active site involves Glu-171. Residue His-174 participates in Zn(2+) binding. A disulfide bridge links Cys-209 with Cys-255.

The protein belongs to the peptidase M43B family.

Its subcellular location is the secreted. Secreted metalloproteinase that allows assimilation of proteinaceous substrates. Plays a pivotal role as a pathogenicity determinant during infections and contributes to the ability of the pathogen to persist within the mammalian host. This Arthroderma otae (strain ATCC MYA-4605 / CBS 113480) (Microsporum canis) protein is Extracellular metalloprotease MCYG_03238.